The sequence spans 617 residues: Leucine aminopeptidase 2 (617 aa).

Residues 139–141 and 271–276 each bind a peptide; these read QCQ and PYGGME. His-300 contacts Zn(2+). Glu-301 serves as the catalytic Proton acceptor. His-304 and Glu-323 together coordinate Zn(2+). The Proton donor role is filled by Tyr-388.

The protein belongs to the peptidase M1 family. Zn(2+) serves as cofactor.

It localises to the cytoplasm. The protein localises to the nucleus. The enzyme catalyses an epoxide + H2O = an ethanediol. In terms of biological role, aminopeptidase that preferentially cleaves di- and tripeptides. Also has low epoxide hydrolase activity (in vitro). Can hydrolyze the epoxide leukotriene LTA(4) but it forms preferentially 5,6-dihydroxy-7,9,11,14-eicosatetraenoic acid rather than the cytokine leukotriene B(4) as the product compared to the homologous mammalian enzyme (in vitro). The polypeptide is Leucine aminopeptidase 2 (Aspergillus terreus (strain NIH 2624 / FGSC A1156)).